A 120-amino-acid chain; its full sequence is Ribonuclease P protein component 2 (120 aa).

It belongs to the eukaryotic/archaeal RNase P protein component 2 family. As to quaternary structure, consists of a catalytic RNA component and at least 4-5 protein subunits. Forms a subcomplex with Rnp3 which stimulates the catalytic RNA.

Its subcellular location is the cytoplasm. It carries out the reaction Endonucleolytic cleavage of RNA, removing 5'-extranucleotides from tRNA precursor.. Part of ribonuclease P, a protein complex that generates mature tRNA molecules by cleaving their 5'-ends. The RNA is catalytic, but its KM for pre-tRNA is 170-fold decreased in the presence of the 4 known protein subunits (Rnp1-4). The protein subunits also decrease the amount of Mg(2+) needed for activity. The sequence is that of Ribonuclease P protein component 2 from Pyrococcus furiosus (strain ATCC 43587 / DSM 3638 / JCM 8422 / Vc1).